We begin with the raw amino-acid sequence, 104 residues long: Protein Rev (104 aa).

Phosphoserine; by host CK2 is present on serine 5. Residues 18–26 form a homomultimerization region; that stretch reads VIKILYQSN. Residues 25-34 are compositionally biased toward polar residues; it reads SNPYPNSKGT. Disordered regions lie at residues 25 to 48 and 63 to 104; these read SNPYPNSKGTRQARRNRRRRWRAR and CLGG…ATTE. The Nuclear localization signal and RNA-binding (RRE) signature appears at 34–50; it reads TRQARRNRRRRWRARQR. A compositionally biased stretch (basic residues) spans 35 to 48; it reads RQARRNRRRRWRAR. Over residues 67-77 the composition is skewed to pro residues; it reads PPEPVDLPLPP. The Nuclear export signal and binding to XPO1 motif lies at 73–84; it reads LPLPPLDRLTLD. A compositionally biased stretch (polar residues) spans 91-104; that stretch reads TPGTESQQGTATTE.

It belongs to the HIV-1 REV protein family. Homomultimer; when bound to the RRE. Multimeric assembly is essential for activity and may involve XPO1. Binds to human KPNB1, XPO1, TNPO1, RANBP5 and IPO7. Interacts with the viral Integrase. Interacts with human KHDRBS1. Interacts with human NAP1; this interaction decreases Rev multimerization and stimulates its activity. Interacts with human DEAD-box helicases DDX3 and DDX24; these interactions may serve for viral RNA export to the cytoplasm and packaging, respectively. Interacts with human PSIP1; this interaction may inhibit HIV-1 DNA integration by promoting dissociation of the Integrase-LEDGF/p75 complex. Post-translationally, asymmetrically arginine dimethylated at one site by host PRMT6. Methylation impairs the RNA-binding activity and export of viral RNA from the nucleus to the cytoplasm. Phosphorylated by protein kinase CK2. Presence of, and maybe binding to the N-terminus of the regulatory beta subunit of CK2 is necessary for CK2-mediated Rev's phosphorylation.

It is found in the host nucleus. Its subcellular location is the host nucleolus. The protein localises to the host cytoplasm. Its function is as follows. Escorts unspliced or incompletely spliced viral pre-mRNAs (late transcripts) out of the nucleus of infected cells. These pre-mRNAs carry a recognition sequence called Rev responsive element (RRE) located in the env gene, that is not present in fully spliced viral mRNAs (early transcripts). This function is essential since most viral proteins are translated from unspliced or partially spliced pre-mRNAs which cannot exit the nucleus by the pathway used by fully processed cellular mRNAs. Rev itself is translated from a fully spliced mRNA that readily exits the nucleus. Rev's nuclear localization signal (NLS) binds directly to KPNB1/Importin beta-1 without previous binding to KPNA1/Importin alpha-1. KPNB1 binds to the GDP bound form of RAN (Ran-GDP) and targets Rev to the nucleus. In the nucleus, the conversion from Ran-GDP to Ran-GTP dissociates Rev from KPNB1 and allows Rev's binding to the RRE in viral pre-mRNAs. Rev multimerization on the RRE via cooperative assembly exposes its nuclear export signal (NES) to the surface. Rev can then form a complex with XPO1/CRM1 and Ran-GTP, leading to nuclear export of the complex. Conversion from Ran-GTP to Ran-GDP mediates dissociation of the Rev/RRE/XPO1/RAN complex, so that Rev can return to the nucleus for a subsequent round of export. Beside KPNB1, also seems to interact with TNPO1/Transportin-1, RANBP5/IPO5 and IPO7/RANBP7 for nuclear import. The nucleoporin-like HRB/RIP is an essential cofactor that probably indirectly interacts with Rev to release HIV RNAs from the perinuclear region to the cytoplasm. The chain is Protein Rev from Human immunodeficiency virus type 1 group N (isolate YBF30) (HIV-1).